Reading from the N-terminus, the 276-residue chain is Large ribosomal subunit protein uL2 (276 aa).

A disordered region spans residues valine 224 to lysine 254.

Belongs to the universal ribosomal protein uL2 family. In terms of assembly, part of the 50S ribosomal subunit. Forms a bridge to the 30S subunit in the 70S ribosome.

Its function is as follows. One of the primary rRNA binding proteins. Required for association of the 30S and 50S subunits to form the 70S ribosome, for tRNA binding and peptide bond formation. It has been suggested to have peptidyltransferase activity; this is somewhat controversial. Makes several contacts with the 16S rRNA in the 70S ribosome. The protein is Large ribosomal subunit protein uL2 of Gluconobacter oxydans (strain 621H) (Gluconobacter suboxydans).